We begin with the raw amino-acid sequence, 183 residues long: UPF0200 protein MmarC7_0527 (183 aa).

ATP is bound at residue G8–S15.

This sequence belongs to the UPF0200 family.

This is UPF0200 protein MmarC7_0527 from Methanococcus maripaludis (strain C7 / ATCC BAA-1331).